The chain runs to 125 residues: Holo-[acyl-carrier-protein] synthase (125 aa).

Positions 8 and 57 each coordinate Mg(2+).

The protein belongs to the P-Pant transferase superfamily. AcpS family. Mg(2+) serves as cofactor.

It is found in the cytoplasm. It catalyses the reaction apo-[ACP] + CoA = holo-[ACP] + adenosine 3',5'-bisphosphate + H(+). In terms of biological role, transfers the 4'-phosphopantetheine moiety from coenzyme A to a Ser of acyl-carrier-protein. The polypeptide is Holo-[acyl-carrier-protein] synthase (Neisseria meningitidis serogroup C (strain 053442)).